The chain runs to 478 residues: Hepatitis A virus cellular receptor 1 (478 aa).

The signal sequence occupies residues 1–24 (MADPIMHLQVVILSLILHLADSVA). The 102-residue stretch at 25–126 (DSVNVDGVAG…WFNDMKITIS (102 aa)) folds into the Ig-like V-type domain. Over 25–397 (DSVNVDGVAG…SPQMVNTTEG (373 aa)) the chain is Extracellular. 3 disulfide bridges follow: C41–C110, C51–C62, and C57–C109. Residues N70 and N87 are each glycosylated (N-linked (GlcNAc...) asparagine). 28 repeat units span residues 148 to 155 (VPTTTTTT), 156 to 161 (LPTTTT), 162 to 167 (LPTTTT), 168 to 173 (LPTTMT), 174 to 179 (LPTTTT), 180 to 185 (LPMTTT), 186 to 191 (LPTTTT), 192 to 197 (VPMTTT), 198 to 201 (LPTT), 202 to 207 (LPTTTT), 208 to 211 (LPTT), 212 to 217 (LPTTTT), 218 to 221 (LPTT), 222 to 227 (LPTTTT), 228 to 233 (LPTTMT), 234 to 239 (LPMTTT), 240 to 245 (LPTTTT), 246 to 251 (LPTTTT), 252 to 257 (LPTTTT), 258 to 263 (LPTTTT), 264 to 268 (LPTTT), 269 to 273 (LPTMT), 274 to 279 (LPTTTT), 280 to 285 (LPTTMT), 286 to 291 (LPMTTT), 292 to 297 (LPTTTT), 298 to 303 (LPTTTT), and 304 to 309 (LPTTTM). Residues 148–309 (VPTTTTTTLP…TTTTLPTTTM (162 aa)) are 28 X 6 AA approximate tandem repeats of L-P-[MT]-T-[MT]-T. Residues 187–303 (PTTTTVPMTT…TTTTLPTTTT (117 aa)) form a disordered region. Disordered regions lie at residues 320–339 (PMQD…PAET) and 344–370 (LLGA…TVTE). Residues 348–370 (TRTQPTSSPLYSYTTDGSDTVTE) show a composition bias toward polar residues. N-linked (GlcNAc...) asparagine glycans are attached at residues N379 and N393. Residues 398 to 418 (IYAGVCISVLVLLAVLGVVIA) form a helical membrane-spanning segment. Topologically, residues 419–478 (KKYFFKKEIQQLSVSFSNHQFKTLQNAVKKEVHAEDNIYIENNLYAMNQDPVVLFESLRP) are cytoplasmic.

The protein belongs to the immunoglobulin superfamily. TIM family. In terms of assembly, interacts with STAM. Interacts with SELPLG.

The protein resides in the cell membrane. Phosphatidylserine receptor that plays an important functional role in regulatory B-cells homeostasis including generation, expansion and suppressor functions. As P-selectin/SELPLG ligand, plays a specialized role in activated but not naive T-cell trafficking during inflammatory responses. Controls thereby T-cell accumulation in the inflamed central nervous system (CNS) and the induction of autoimmune disease. Also regulates expression of various anti-inflammatory cytokines and co-inhibitory ligands including IL10. Acts as a regulator of T-cell proliferation. May play a role in kidney injury and repair. The chain is Hepatitis A virus cellular receptor 1 (HAVCR1) from Chlorocebus aethiops (Green monkey).